A 287-amino-acid polypeptide reads, in one-letter code: uncharacterized protein (287 aa).

3 disordered regions span residues 109-175, 203-223, and 257-287; these read QEES…SSQD, IPPP…SQPV, and KESE…SSEE. The segment covering 110–136 has biased composition (low complexity); sequence EESSSSLEEGIIEDPVVATPSPASAAP. The segment covering 143–152 has biased composition (basic and acidic residues); sequence RKEFKNEKWK. Residues 153–162 show a composition bias toward basic residues; it reads EKKKQGRRRN. The segment covering 273–287 has biased composition (basic and acidic residues); that stretch reads SLEEASVHDRISSEE.

The protein belongs to the chlamydial CPn_0623/CT_504/TC_0791 family.

This is an uncharacterized protein from Chlamydia muridarum (strain MoPn / Nigg).